A 347-amino-acid chain; its full sequence is Ornithine transcarbamylase, mitochondrial (347 aa).

The N-terminal 25 residues, 1–25 (MINSISNTVLLKSVVSKRFFSSSAK), are a transit peptide targeting the mitochondrion. Residues 84 to 87 (STRT), Arg135, His162, and Gln165 contribute to the carbamoyl phosphate site. The L-ornithine site is built by Asn194, Asp258, Ser262, and Met263. Cys300 (proton acceptor) is an active-site residue. Carbamoyl phosphate-binding positions include 300 to 301 (CL) and Arg328.

Belongs to the aspartate/ornithine carbamoyltransferase superfamily. OTCase family.

It is found in the mitochondrion matrix. It catalyses the reaction carbamoyl phosphate + L-ornithine = L-citrulline + phosphate + H(+). It functions in the pathway amino-acid biosynthesis; L-arginine biosynthesis; L-arginine from L-ornithine and carbamoyl phosphate: step 1/3. This is Ornithine transcarbamylase, mitochondrial (OTC) from Pachysolen tannophilus (Yeast).